The chain runs to 178 residues: GTP-dependent dephospho-CoA kinase (178 aa).

GTP is bound by residues aspartate 48, isoleucine 49, aspartate 67, lysine 69, and glutamate 126.

Belongs to the GTP-dependent DPCK family.

It carries out the reaction 3'-dephospho-CoA + GTP = GDP + CoA + H(+). It participates in cofactor biosynthesis; coenzyme A biosynthesis. Catalyzes the GTP-dependent phosphorylation of the 3'-hydroxyl group of dephosphocoenzyme A to form coenzyme A (CoA). This is GTP-dependent dephospho-CoA kinase from Methanothrix thermoacetophila (strain DSM 6194 / JCM 14653 / NBRC 101360 / PT) (Methanosaeta thermophila).